A 336-amino-acid polypeptide reads, in one-letter code: Glyceraldehyde-3-phosphate dehydrogenase (336 aa).

NAD(+) contacts are provided by residues 12 to 13 (RI), Asp-34, and Met-79. Residues 150 to 152 (SCT), Thr-181, 210 to 211 (TG), and Arg-233 each bind D-glyceraldehyde 3-phosphate. Catalysis depends on Cys-151, which acts as the Nucleophile. Residue Asn-316 participates in NAD(+) binding.

Belongs to the glyceraldehyde-3-phosphate dehydrogenase family. In terms of assembly, homotetramer.

Its subcellular location is the cytoplasm. The enzyme catalyses D-glyceraldehyde 3-phosphate + phosphate + NAD(+) = (2R)-3-phospho-glyceroyl phosphate + NADH + H(+). Its pathway is carbohydrate degradation; glycolysis; pyruvate from D-glyceraldehyde 3-phosphate: step 1/5. This is Glyceraldehyde-3-phosphate dehydrogenase from Echinococcus multilocularis (Fox tapeworm).